We begin with the raw amino-acid sequence, 247 residues long: 4-nitrobenzoate reductase (247 aa).

29 to 33 (RRSVR) provides a ligand contact to FMN. 4 residues coordinate NADP(+): Ser59, Arg112, Tyr120, and Leu126. Arg232 lines the FMN pocket.

Belongs to the nitroreductase family. FMN serves as cofactor.

It catalyses the reaction 4-nitrobenzoate + 2 NADPH + 2 H(+) = 4-hydroxylaminobenzoate + 2 NADP(+) + H2O. Its function is as follows. Nitroreductase involved in the degradation of nitroaromatic compounds. Catalyzes the conversion of 4-nitrobenzoate to 4-hydroxylaminobenzoate. The polypeptide is 4-nitrobenzoate reductase (Nocardioides sp. (strain LMS-CY)).